We begin with the raw amino-acid sequence, 405 residues long: Acetate kinase (405 aa).

Residue Asn-7 coordinates Mg(2+). ATP is bound at residue Lys-14. Arg-91 contacts substrate. Asp-148 acts as the Proton donor/acceptor in catalysis. Residues 208-212 and 283-285 each bind ATP; these read HLGNG and DFR. Glu-384 lines the Mg(2+) pocket.

Belongs to the acetokinase family. As to quaternary structure, homodimer. Requires Mg(2+) as cofactor. Mn(2+) is required as a cofactor.

The protein localises to the cytoplasm. It catalyses the reaction acetate + ATP = acetyl phosphate + ADP. The protein operates within metabolic intermediate biosynthesis; acetyl-CoA biosynthesis; acetyl-CoA from acetate: step 1/2. Functionally, catalyzes the formation of acetyl phosphate from acetate and ATP. Can also catalyze the reverse reaction. This chain is Acetate kinase, found in Dictyoglomus turgidum (strain DSM 6724 / Z-1310).